The chain runs to 194 residues: Large ribosomal subunit protein eL15 (194 aa).

The tract at residues 164 to 194 (SAGKKGRGLRNKGIGAEKVRPSIRAHGRRGK) is disordered. Positions 184 to 194 (PSIRAHGRRGK) are enriched in basic residues.

It belongs to the eukaryotic ribosomal protein eL15 family.

The protein is Large ribosomal subunit protein eL15 (rpl15e) of Methanocaldococcus jannaschii (strain ATCC 43067 / DSM 2661 / JAL-1 / JCM 10045 / NBRC 100440) (Methanococcus jannaschii).